The primary structure comprises 775 residues: Acylamino-acid-releasing enzyme 1 (775 aa).

Active-site charge relay system residues include Ser627, Asp718, and His750.

This sequence belongs to the peptidase S9C family. Homotetramer.

It is found in the cytoplasm. The enzyme catalyses Cleavage of an N-acetyl or N-formyl amino acid from the N-terminus of a polypeptide.. Catalyzes the hydrolysis of the N-terminal peptide bond of an N-acetylated peptide to generate an N-acetylated amino acid and a peptide with a free N-terminus. This is Acylamino-acid-releasing enzyme 1 from Oryza sativa subsp. japonica (Rice).